The following is a 436-amino-acid chain: Cyclic GMP-AMP synthase (436 aa).

112–117 is a GTP binding site; the sequence is QGSFQY. 2 residues coordinate Mg(2+): Asp-131 and Asp-133. Arg-182 provides a ligand contact to ATP. Asp-193 is a Mg(2+) binding site. Position 259 (Ser-259) interacts with ATP. GTP-binding residues include Lys-287, Ser-301, and Asp-348. Disordered regions lie at residues 339–358 and 417–436; these read RGVESPDSTDEKPLFPPSYK and AQEPSSASKPEKISSTMVSG. A compositionally biased stretch (polar residues) spans 419–436; the sequence is EPSSASKPEKISSTMVSG. Gly-436 is covalently cross-linked (Glycyl lysine isopeptide (Gly-Lys) (interchain with K-? in acceptor proteins)).

The protein belongs to the CD-NTase family. A01 subfamily. As to quaternary structure, monomer. Interacts with Cap2 in the presence and absence of phage T2. A Cap2 dimer is bound on either side by a DncV monomer. Mg(2+) is required as a cofactor. In bacteria expressing capV-cdnD-cap2, this protein is conjugated to a number of other proteins (by Cap2 via this protein's C-terminal Gly residue), many of which are involved in metabolism. More conjugated protein is found in the absence of Cap3.

The enzyme catalyses GTP + ATP = 3',3'-cGAMP + 2 diphosphate. With respect to regulation, primed for activation by Cap2 which conjugates it to cellular proteins; priming is target protein-specific (green fluorescent protein does not activate the enzyme), but which protein(s) activate is unclear. Enzymatic activity of DncV is inhibited by folate-like molecules, such as 5-methyltetrahydrofolate di-glutamate and 5-methyltetrahydrofolate, suggesting the existence of a signaling pathway that links folate-like metabolism cofactors to the regulation of cyclic dinucleotide second messenger synthesis. Lacks a regulatory loop and is constitutively activated. Its function is as follows. Cyclic nucleotide synthase (second messenger synthase) of a CBASS antivirus system. CBASS (cyclic oligonucleotide-based antiphage signaling system) provides immunity against bacteriophages. The CD-NTase protein (DncV, this protein) synthesizes cyclic nucleotides in response to infection; these serve as specific second messenger signals. The signals activate a diverse range of effectors, leading to bacterial cell death and thus abortive phage infection. A type II-A(GA) CBASS system. Functionally, catalyzes the synthesis of 3',3'-cyclic GMP-AMP (cGAMP), a second messenger in cell signal transduction, from GTP and ATP in response to phage infection. Also able to produce c-di-AMP and c-di-GMP from ATP and GTP, respectively; however, cGAMP is the dominant molecule produced by DncV in vivo, contrary to the 2'3'-cGAMP produced by eukaryotes. Is required for efficient V.cholerae intestinal colonization, and down-regulates the colonization-influencing process of chemotaxis. Is not active with dATP, TTP, UTP or CTP. Its product controls the activity of cGAMP-activated phospholipase CapV, a patatin-like lipase that is a direct cGAMP receptor encoded in the dncV operon. Protects E.coli against phage infection. When the CBASS operon (capV-dncV-cap2-cap3) is introduced in E.coli MG1655 there is about 100-fold protection against phages P1 and T2. When the operon is introduced in E.coli MG1655 there is a more than 10(3) decrease in the efficiency of T2 plaque formation. Protects 100-fold against phage T5, offers no protection against T7. When the operon is introduced in E.coli MG1655 it protects against phages T2, T4, T5 and T6. Another paper shows the operon confers protection against phages P1, T2, T5 and T6 but not T4 or lambda. The polypeptide is Cyclic GMP-AMP synthase (Vibrio cholerae serotype O1 (strain ATCC 39315 / El Tor Inaba N16961)).